The following is a 594-amino-acid chain: MASSTPSSSATSSNAGADPNTTNLRPTTYDTWCGVAHGCTRKLGLKICGFLQRTNSLEEKSRLVSAFKERQSSKNLLSCENSDKDGRFRRTETDFSNLFARDLLPAKNGEEQTVQFLLEVVDILLNYVRKTFDRSTKVLDFHHPHQLLEGMEGFNLELSDHPESLEQILVDCRDTLKYGVRTGHPRFFNQLSTGLDIIGLAGEWLTSTANTNMFTYEIAPVFVLMEQITLKKMREIVGWSSKDGDGIFSPGGAISNMYSIMAARFKYFPEVKTKGMAAVPKLVLFTSEHSHYSIKKAGAALGFGTDNVILIKCNERGKIIPADLETKILEAKQKGYVPLYVNATAGTTVYGAFDPIQEIADICEKYNLWLHVDAAWGGGLLMSQKHRHKLSGIERANSVTWNPHKMMGVLLQCSAILVKEKGILQGCNQMCAGYLFQPDKQYDVSYDTGDKAIQCGRHVDIFKFWLMWKAKGTVGFENQINKCLELAEYLYAKIKNREEFEMVFDGEPEHTNVCFWYIPQSLRGVPDSPERREKLHRVAPKIKALMMESGTTMVGYQPQGDKANFFRMVISNPAATQSDIDFLIEEIERLGQDL.

The span at 1–13 (MASSTPSSSATSS) shows a compositional bias: low complexity. Positions 1–23 (MASSTPSSSATSSNAGADPNTTN) are disordered. A Phosphoserine modification is found at S78. 190-192 (QLS) serves as a coordination point for 4-aminobutanoate. The residue at position 405 (K405) is an N6-(pyridoxal phosphate)lysine. Position 567 (R567) interacts with 4-aminobutanoate.

It belongs to the group II decarboxylase family. Homodimer. It depends on pyridoxal 5'-phosphate as a cofactor.

The catalysed reaction is L-glutamate + H(+) = 4-aminobutanoate + CO2. In terms of biological role, catalyzes the synthesis of the inhibitory neurotransmitter gamma-aminobutyric acid (GABA) with pyridoxal 5'-phosphate as cofactor. This Bos taurus (Bovine) protein is Glutamate decarboxylase 1 (GAD1).